The following is a 375-amino-acid chain: GTPase HflX (375 aa).

The region spanning 194–371 (PHIAIVGYAS…RIATLLAGTK (178 aa)) is the Hflx-type G domain. GTP is bound by residues 200–207 (GYASAGKT), 225–229 (FTTIT), 246–249 (DTVG), 314–317 (NKID), and 349–351 (SAK). The Mg(2+) site is built by Thr207 and Thr227.

The protein belongs to the TRAFAC class OBG-HflX-like GTPase superfamily. HflX GTPase family. As to quaternary structure, monomer. Associates with the 50S ribosomal subunit. Mg(2+) is required as a cofactor.

The protein resides in the cytoplasm. In terms of biological role, GTPase that associates with the 50S ribosomal subunit and may have a role during protein synthesis or ribosome biogenesis. The protein is GTPase HflX of Hyperthermus butylicus (strain DSM 5456 / JCM 9403 / PLM1-5).